The sequence spans 211 residues: Large ribosomal subunit protein uL3 (211 aa).

A disordered region spans residues 134-155 (ATHGNSLSHRAPGSIGQNQTPG). Gln-152 bears the N5-methylglutamine mark.

This sequence belongs to the universal ribosomal protein uL3 family. Part of the 50S ribosomal subunit. Forms a cluster with proteins L14 and L19. In terms of processing, methylated by PrmB.

In terms of biological role, one of the primary rRNA binding proteins, it binds directly near the 3'-end of the 23S rRNA, where it nucleates assembly of the 50S subunit. The sequence is that of Large ribosomal subunit protein uL3 from Methylococcus capsulatus (strain ATCC 33009 / NCIMB 11132 / Bath).